Reading from the N-terminus, the 169-residue chain is Heat shock protein beta-7 (169 aa).

Residues 1–37 (MSHRTSSAFRAERSFRSSSSSSSSSSSSASRALPAQD) form a disordered region. The interval 1-70 (MSHRTSSAFR…PLAFPARPGG (70 aa)) is required for localization to SC35 splicing speckles. Residues 16-32 (RSSSSSSSSSSSSASRA) are compositionally biased toward low complexity. Positions 61–169 (PLAFPARPGG…QQTFRTEIKI (109 aa)) constitute a sHSP domain.

The protein belongs to the small heat shock protein (HSP20) family. Interacts with C-terminal domain of actin-binding protein 280. As to expression, found in both cardiac and slow skeletal (soleus) muscle.

The protein localises to the cytoplasm. The protein resides in the nucleus. It is found in the cajal body. The protein is Heat shock protein beta-7 (Hspb7) of Mus musculus (Mouse).